The primary structure comprises 726 residues: Probable cyclic nucleotide-gated ion channel 14 (726 aa).

Over 1-86 the chain is Cytoplasmic; sequence MEFKRDNTVR…GDAVLQWNRV (86 aa). The chain crosses the membrane as a helical span at residues 87-107; the sequence is FLFWCLVALYVDPLFFFLSSV. The Extracellular segment spans residues 108 to 122; the sequence is KRIGRSSCMTTDLKL. The helical transmembrane segment at 123-143 threads the bilayer; sequence GIVITFFRTLADLFYVLHIVI. The Cytoplasmic segment spans residues 144 to 177; it reads KFRTAYVSRTSRVFGRGELVKDPKLIARRYLRSD. Residues 178-198 form a helical membrane-spanning segment; that stretch reads FIVDLIACLPLPQIVSWFILP. Residues 199 to 211 are Extracellular-facing; that stretch reads SIRSSHSDHTTNA. The helical transmembrane segment at 212-232 threads the bilayer; it reads LVLIVLVQYIPRLYLIFPLSA. Residues 233 to 252 are Cytoplasmic-facing; it reads EIIKATGVVTTTAWAGAAYN. The chain crosses the membrane as a helical span at residues 253 to 273; that stretch reads LLQYMLASHILGSAWYLLSIE. Residues 274–377 are Extracellular-facing; the sequence is RQATCWKAEC…LSTSTSVLET (104 aa). The helical transmembrane segment at 378-398 threads the bilayer; that stretch reads MFAILVAIFGLVLFALLIGNM. At 399–726 the chain is on the cytoplasmic side; sequence QTYLQSITVR…PDEPDFSVDD (328 aa). Residues 481-605 and glutamate 552 contribute to the a nucleoside 3',5'-cyclic phosphate site; that span reads LFAQ…SKKL. Positions 597–612 are calmodulin-binding; the sequence is FRRLHSKKLQHTFRYY. One can recognise an IQ domain in the interval 617–646; the sequence is RTWAACFVQVAWRRYKRKKLAKSLSLAESF. A disordered region spans residues 707–726; it reads KDVEIPMLPKPDEPDFSVDD.

Belongs to the cyclic nucleotide-gated cation channel (TC 1.A.1.5) family. In terms of assembly, homotetramer or heterotetramer.

It is found in the cell membrane. Functionally, probable cyclic nucleotide-gated ion channel. In Arabidopsis thaliana (Mouse-ear cress), this protein is Probable cyclic nucleotide-gated ion channel 14 (CNGC14).